The following is a 156-amino-acid chain: MNNAIKLNSIFTELSKKKKPKLIGRGIGCGKGKTSGRGHKGQKARSGTSINGFEGGQQSIYTRLPKRGFNPIRRNICSIINVGDVQRLIEAKKIEKNSVIDKEILHKLGFIKSIKDKIKLLNKGKLNERCVFHVDFASEAAKKSVTSIGGSVEILS.

The segment at 25 to 49 (RGIGCGKGKTSGRGHKGQKARSGTS) is disordered. Over residues 34 to 43 (TSGRGHKGQK) the composition is skewed to basic residues.

Belongs to the universal ribosomal protein uL15 family. In terms of assembly, part of the 50S ribosomal subunit.

In terms of biological role, binds to the 23S rRNA. The protein is Large ribosomal subunit protein uL15 of Wolbachia sp. subsp. Brugia malayi (strain TRS).